The chain runs to 244 residues: tRNA pseudouridine synthase A (244 aa).

Asp52 serves as the catalytic Nucleophile. Residue Tyr110 coordinates substrate.

This sequence belongs to the tRNA pseudouridine synthase TruA family. In terms of assembly, homodimer.

The enzyme catalyses uridine(38/39/40) in tRNA = pseudouridine(38/39/40) in tRNA. Formation of pseudouridine at positions 38, 39 and 40 in the anticodon stem and loop of transfer RNAs. This chain is tRNA pseudouridine synthase A, found in Clostridium botulinum (strain Alaska E43 / Type E3).